Reading from the N-terminus, the 364-residue chain is Dihydroflavonol 4-reductase (364 aa).

Positions 45 and 164 each coordinate NADP(+).

Belongs to the NAD(P)-dependent epimerase/dehydratase family. Dihydroflavonol-4-reductase subfamily.

The catalysed reaction is a (2R,3S,4S)-leucoanthocyanidin + NADP(+) = a (2R,3R)-dihydroflavonol + NADPH + H(+). It catalyses the reaction (2S)-flavan-4-ol + NADP(+) = (2S)-flavanone + NADPH + H(+). The protein operates within pigment biosynthesis; anthocyanin biosynthesis. Functionally, bifunctional enzyme involved in flavonoid metabolism. This Callistephus chinensis (China aster) protein is Dihydroflavonol 4-reductase (F).